The sequence spans 1118 residues: MLGILAKLFGTKSGRDIKKLQPLVERINEEFQKLHALDDNQLRAQTDKIKGIIDADLSGIDKQIKEHHDKIAANPDLSIDEKEVVFQAIDKLELERNKELEKVLEKVLPQAFAVVKDTARRWKENGKLTVTATPMDIELASRKKNVQIIGSTAEWSSKWLAAGTEVTWEMQHFDVQLIGGMVLHHGKISEMGTGEGKTLVATLPAYLNALARRGVHVVTVNDYLAKRDSEWMAPLFEFHGISVDCIDKYQPNSEERRKAYRADITYGTNNEFGFDYLRDNMATDKDDLVQRGHHYAMVDEVDSVLIDDARTPLIISGPVPKGDQHEFAELKPRIQRVLEEQKKLINTYLVEAKRYIAAGKEKEAGLELLRAHRGYPGYKPLIKQLSETGIKSILQKTENEYMAENNKRMPEVDLPLYFVIDEKHNQVDFTEKGVDFITGEQEDPTLFVLPDIGSELAKIEKDKSISDQERMEQTEKLLSDYSIKQERIHTLQQLLKAYTLFEKDTDYVIMDGKVKIVDEQTGRIMDGRRYSDGLHQALEAKENVRVEEATQTYATITLQNYFRMYHKLSGMTGTAETEEAEFQQIYNLDVVVVPTNRSIARLDEQDKVYKTTREKYNAVADEIVELTEKGRPVLVGTTSVDISELLSRMLKMRNIKHQVLNAKLHAKEADVVAEAGKPGTVTIATNMAGRGTDIKLTAEAKASGGLAIIGTERHESRRVDRQLRGRAGRQGDPGSSQFFVSLEDNLMRLFGSDRIAKFMDRMGYKEGEVIQHSMISNSIERAQKKVEENNFGQRKRLLEYDNVMNSQRVVIYKRRKNALYGERLKLDILNMIFDLCEDMVFGAYTTKNYDNFKLRSISVFGVIPDITEEVFNKATAETLVKSFYEEVLAHYEQKIKFVKEKTQPTFNELQLTRGETIENIVIPFTDGKRNINIIAPLKELAQSDSRALEQAIERYITLAVIDMHWKDHLREMDELKQSVQNAAYEQKDPLLVYKFEGFELFKKFVYTVNADIVSFLFKADIPKQDTVPVRELKQQPVQQPKYRETKDEAGSAFGGGNANQQVEEAVAPPKAEPLRSQKIANRNDKVSVQYMDGSVKRDIKYKAVEDDLLSNKCVLIEE.

ATP is bound by residues Gln176, 194-198 (GEGKT), and Asp693. The tract at residues 1034-1056 (QQPVQQPKYRETKDEAGSAFGGG) is disordered.

The protein belongs to the SecA family. As to quaternary structure, monomer and homodimer. Part of the essential Sec protein translocation apparatus which comprises SecA, SecYEG and auxiliary proteins SecDF. Other proteins may also be involved.

Its subcellular location is the cell inner membrane. The protein resides in the cytoplasm. It catalyses the reaction ATP + H2O + cellular proteinSide 1 = ADP + phosphate + cellular proteinSide 2.. Functionally, part of the Sec protein translocase complex. Interacts with the SecYEG preprotein conducting channel. Has a central role in coupling the hydrolysis of ATP to the transfer of proteins into and across the cell membrane, serving as an ATP-driven molecular motor driving the stepwise translocation of polypeptide chains across the membrane. The sequence is that of Protein translocase subunit SecA from Cytophaga hutchinsonii (strain ATCC 33406 / DSM 1761 / CIP 103989 / NBRC 15051 / NCIMB 9469 / D465).